The following is a 528-amino-acid chain: Capsule biosynthesis protein CapD proenzyme (528 aa).

A signal peptide spans 1–26 (MNSFKWGKKIILFCLIVSLMGGIGVS). T352 serves as the catalytic Nucleophile. Poly-gamma-D-glutamate-binding positions include T352, 429-432 (GGNR), and R520.

Belongs to the gamma-glutamyltransferase family. This enzyme consists of two polypeptide chains, which are synthesized in precursor form from a single polypeptide. Cleaved by autocatalysis into a large and a small subunit.

It functions in the pathway capsule biogenesis; capsule polysaccharide biosynthesis. In terms of biological role, transpeptidase that cleaves the poly-gamma-D-glutamate capsule and catalyzes the formation of an amide bond with the side-chain amino group of meso-diaminopimelic acid (m-DAP) in the peptidoglycan scaffold. Degradation of the high-molecular weight capsule (H-capsule) to the lower-molecular weight capsule (L-capsule), which is released from the bacterial cell surface. The production of L-capsule is essential to mediate escape from host defenses. The protein is Capsule biosynthesis protein CapD proenzyme (capD) of Bacillus anthracis.